Here is a 175-residue protein sequence, read N- to C-terminus: Thioredoxin M-type, chloroplastic (175 aa).

A chloroplast-targeting transit peptide spans 1 to 62 (MALETCLRGW…ARRPSRFVCK (62 aa)). In terms of domain architecture, Thioredoxin spans 63–174 (CKNVVDEVIV…LCTIIDKYIG (112 aa)). An intrachain disulfide couples Cys98 to Cys101.

The protein belongs to the thioredoxin family. Plant M-type subfamily. In terms of assembly, forms a complex with heterodimeric ferredoxin-thioredoxin reductase (FTR) and ferredoxin.

The protein localises to the plastid. Its subcellular location is the chloroplast. Its function is as follows. Participates in various redox reactions through the reversible oxidation of the active center dithiol to a disulfide. The M form is known to activate NADP-malate dehydrogenase. This chain is Thioredoxin M-type, chloroplastic, found in Triticum aestivum (Wheat).